Reading from the N-terminus, the 151-residue chain is Deoxyuridine 5'-triphosphate nucleotidohydrolase (151 aa).

Substrate-binding positions include 70-72 (RSG), asparagine 83, 87-89 (LID), and lysine 97.

The protein belongs to the dUTPase family. The cofactor is Mg(2+).

The enzyme catalyses dUTP + H2O = dUMP + diphosphate + H(+). The protein operates within pyrimidine metabolism; dUMP biosynthesis; dUMP from dCTP (dUTP route): step 2/2. Its function is as follows. This enzyme is involved in nucleotide metabolism: it produces dUMP, the immediate precursor of thymidine nucleotides and it decreases the intracellular concentration of dUTP so that uracil cannot be incorporated into DNA. The chain is Deoxyuridine 5'-triphosphate nucleotidohydrolase from Idiomarina loihiensis (strain ATCC BAA-735 / DSM 15497 / L2-TR).